The following is a 548-amino-acid chain: Acetamidase (548 aa).

Active-site charge relay system residues include K129 and S204. The Acyl-ester intermediate role is filled by S228.

Belongs to the amidase family.

The enzyme catalyses a monocarboxylic acid amide + H2O = a monocarboxylate + NH4(+). It catalyses the reaction acetamide + H2O = acetate + NH4(+). Its function is as follows. Allows acetamide to be used as a sole carbon or nitrogen source. The protein is Acetamidase (amdS) of Emericella nidulans (strain FGSC A4 / ATCC 38163 / CBS 112.46 / NRRL 194 / M139) (Aspergillus nidulans).